The primary structure comprises 613 residues: Immunoglobulin superfamily member 8 (613 aa).

An N-terminal signal peptide occupies residues 1 to 27 (MGALRPTLLPPSLPLLLLLMLGMGCWA). Ig-like C2-type domains are found at residues 28–149 (REVL…LRVL), 162–286 (PRGR…WAQI), 303–424 (SQLA…EAAS), and 431–560 (PVHV…WYQA). At 28-579 (REVLVPEGPL…VYPYMHALDT (552 aa)) the chain is on the extracellular side. The cysteines at positions 49 and 127 are disulfide-linked. Asn-50 carries N-linked (GlcNAc...) asparagine glycosylation. Residues 155-174 (VSAAPPGPRGRQAPTSPPRM) are disordered. A disulfide bridge links Cys-186 with Cys-270. The EWI motif signature appears at 274-276 (EWI). 2 disulfides stabilise this stretch: Cys-326–Cys-406 and Cys-462–Cys-544. 2 N-linked (GlcNAc...) asparagine glycosylation sites follow: Asn-327 and Asn-463. A Phosphoserine modification is found at Ser-518. Residues 580–600 (LFVPLLVGTGVALVTGATVLG) form a helical membrane-spanning segment. The Cytoplasmic segment spans residues 601–613 (TITCCFMKRLRKR). S-palmitoyl cysteine attachment occurs at residues Cys-604 and Cys-605.

As to quaternary structure, interacts directly with CD82, CD81/tetraspanin-28 and CD9/tetraspanin-29. Also interacts with integrin alpha-3/beta-1 and integrin alpha-4/beta-1. Interacts with HSPA8; this interaction modulates migratory and antigen-presenting capacities of dendritic cells. In terms of tissue distribution, expressed in brain, kidney, testis, liver and placenta with moderate expression in all other tissues. Detected on a majority of B-cells, T-cells, and natural killer cells. Expressed on dendritic cells.

It localises to the cell membrane. Functionally, member of the immunoglobulin superfamily (IgSF) that links tetraspanin-enriched microdomains to the actin cytoskeleton and plays several important roles in innate and adaptive immunity. Acts as an inducible receptor of HSPA8 on dendritic cells to enhance the CCL21/SLC-dependent migration of activated mature dendritic cells while attenuating their antigen-specific stimulatory capacities. In complex with alpha-actinins ACTN1 and ACTN4, regulates actin dynamics in the immune synapse and subsequent T-cell activation. Inhibits the entry of several viruses such as hepatitis C Virus (HCV) or HIV-1. Mechanistically, promotes a change in CD81 organization at the plasma membrane by significantly restricting its diffusion which in turn influences CD81 interaction with Claudin-1/CLDN1, preventing CLDN1 from acting as a co-receptor required for HCV entry. Accumulates at the presynaptic terminal, the producer cell side of the virological synapse, to prevent HIV-1 Env-mediated cell-cell fusion. Highly expressed on malignant cells with antigen presentation defects, interacts with NK receptor KIR3DL2 to suppress NK-cell cytotoxicity. May participate in the regulation of neurite outgrowth and maintenance of the neural network in the adult brain. The chain is Immunoglobulin superfamily member 8 (IGSF8) from Homo sapiens (Human).